A 501-amino-acid chain; its full sequence is MAGGGGGSTSGEGPRELDQTPTWAVSTVCGVIILISIVLELMIHKIGEVFTERRKKALYEALQKIKNELMVLGFISLLLTFGQNYIASLCVASRYGHAMSFCGPYDGPSGESKKPKTTEHLERRVLADAAPAQCKKGYVPLISLNALHQVHIFIFFLAVFHVIYSAITMMLGRAKIRGWKVWEEEVINDHEMMNDPSRFRLTHETSFVREHVNPWAKNRFSFYVMCFFRQMLRSVRKSDYLTMRHGFISVHLAPGMKFNFQKYIKRSLEDDFKVVVGISPELWAFVMLFLLFDVHGWYVTAVITMIPPLLTLAIGTKLQAIISDMALEIQERHAVIQGMPLVNVSDRHFWFSRPALVLHIIHFILFQNAFEITYFFWIWYEFGLRSCFHHHFALIIIRVALGVGVQFLCSYITLPLYALVTQMGSTMKRSVFDDQTSKALKNWHKNAKKKSETPGQTQPPLPNLRPKTGGDIESASPANITASVDVKESDQSQSRDLLSGP.

Over 1–22 the chain is Extracellular; that stretch reads MAGGGGGSTSGEGPRELDQTPT. The chain crosses the membrane as a helical span at residues 23 to 43; it reads WAVSTVCGVIILISIVLELMI. At 44-68 the chain is on the cytoplasmic side; that stretch reads HKIGEVFTERRKKALYEALQKIKNE. Residues 69–89 traverse the membrane as a helical segment; sequence LMVLGFISLLLTFGQNYIASL. The Extracellular portion of the chain corresponds to 90-151; sequence CVASRYGHAM…ISLNALHQVH (62 aa). A helical membrane pass occupies residues 152–172; the sequence is IFIFFLAVFHVIYSAITMMLG. Over 173–273 the chain is Cytoplasmic; that stretch reads RAKIRGWKVW…IKRSLEDDFK (101 aa). Residues 274–294 traverse the membrane as a helical segment; sequence VVVGISPELWAFVMLFLLFDV. His-295 is a topological domain (extracellular). Residues 296–316 form a helical membrane-spanning segment; the sequence is GWYVTAVITMIPPLLTLAIGT. Residues 317-359 are Cytoplasmic-facing; that stretch reads KLQAIISDMALEIQERHAVIQGMPLVNVSDRHFWFSRPALVLH. A helical membrane pass occupies residues 360 to 380; the sequence is IIHFILFQNAFEITYFFWIWY. At 381 to 391 the chain is on the extracellular side; that stretch reads EFGLRSCFHHH. A helical transmembrane segment spans residues 392–412; that stretch reads FALIIIRVALGVGVQFLCSYI. The Cytoplasmic portion of the chain corresponds to 413–501; it reads TLPLYALVTQ…SQSRDLLSGP (89 aa). A disordered region spans residues 443-501; that stretch reads WHKNAKKKSETPGQTQPPLPNLRPKTGGDIESASPANITASVDVKESDQSQSRDLLSGP. The tract at residues 450-471 is calmodulin-binding; the sequence is KSETPGQTQPPLPNLRPKTGGD. Residues 491–501 are compositionally biased toward polar residues; the sequence is QSQSRDLLSGP.

The protein belongs to the MLO family.

The protein resides in the membrane. Functionally, may be involved in modulation of pathogen defense and leaf cell death. Activity seems to be regulated by Ca(2+)-dependent calmodulin binding and seems not to require heterotrimeric G proteins. The polypeptide is MLO-like protein 5 (MLO5) (Arabidopsis thaliana (Mouse-ear cress)).